A 678-amino-acid polypeptide reads, in one-letter code: DNA ligase (678 aa).

NAD(+)-binding positions include 35 to 39, 84 to 85, and E116; these read DSVYD and SL. The active-site N6-AMP-lysine intermediate is K118. NAD(+) contacts are provided by R139, E178, K297, and K321. Zn(2+)-binding residues include C415, C418, C433, and C438. Residues 600-678 form the BRCT domain; that stretch reads DGNQIFAGKT…EAQLLEMLNE (79 aa).

It belongs to the NAD-dependent DNA ligase family. LigA subfamily. The cofactor is Mg(2+). Requires Mn(2+) as cofactor.

The enzyme catalyses NAD(+) + (deoxyribonucleotide)n-3'-hydroxyl + 5'-phospho-(deoxyribonucleotide)m = (deoxyribonucleotide)n+m + AMP + beta-nicotinamide D-nucleotide.. Its function is as follows. DNA ligase that catalyzes the formation of phosphodiester linkages between 5'-phosphoryl and 3'-hydroxyl groups in double-stranded DNA using NAD as a coenzyme and as the energy source for the reaction. It is essential for DNA replication and repair of damaged DNA. The protein is DNA ligase of Nostoc punctiforme (strain ATCC 29133 / PCC 73102).